We begin with the raw amino-acid sequence, 150 residues long: UPF0506 protein SJCHGC03047 (150 aa).

Residues 1–18 form the signal peptide; it reads MNTCIQLLILCLVTLTNS. Residues Asn20, Asn48, and Asn110 are each glycosylated (N-linked (GlcNAc...) asparagine). 3 disulfides stabilise this stretch: Cys116–Cys130, Cys123–Cys134, and Cys129–Cys139.

The protein belongs to the UPF0506 family.

The protein resides in the secreted. In Schistosoma japonicum (Blood fluke), this protein is UPF0506 protein SJCHGC03047.